The sequence spans 65 residues: NADH dehydrogenase [ubiquinone] 1 alpha subcomplex subunit 1 (65 aa).

The helical transmembrane segment at 3–23 (LVWLEAMLPLGIIGGMLCIMG) threads the bilayer.

Belongs to the complex I NDUFA1 subunit family. As to quaternary structure, complex I is composed of at least 49 different subunits.

It is found in the mitochondrion inner membrane. In terms of biological role, accessory subunit of the mitochondrial membrane respiratory chain NADH dehydrogenase (Complex I), that is believed not to be involved in catalysis. Complex I functions in the transfer of electrons from NADH to the respiratory chain. The immediate electron acceptor for the enzyme is believed to be ubiquinone. This Arabidopsis thaliana (Mouse-ear cress) protein is NADH dehydrogenase [ubiquinone] 1 alpha subcomplex subunit 1.